A 594-amino-acid chain; its full sequence is DNA mismatch repair protein MutL (594 aa).

Belongs to the DNA mismatch repair MutL/HexB family.

Its function is as follows. This protein is involved in the repair of mismatches in DNA. It is required for dam-dependent methyl-directed DNA mismatch repair. May act as a 'molecular matchmaker', a protein that promotes the formation of a stable complex between two or more DNA-binding proteins in an ATP-dependent manner without itself being part of a final effector complex. In Rhizorhabdus wittichii (strain DSM 6014 / CCUG 31198 / JCM 15750 / NBRC 105917 / EY 4224 / RW1) (Sphingomonas wittichii), this protein is DNA mismatch repair protein MutL.